We begin with the raw amino-acid sequence, 170 residues long: NADH-quinone oxidoreductase subunit B (170 aa).

4 residues coordinate [4Fe-4S] cluster: C46, C47, C111, and C141.

This sequence belongs to the complex I 20 kDa subunit family. As to quaternary structure, NDH-1 is composed of 14 different subunits. Subunits NuoB, C, D, E, F, and G constitute the peripheral sector of the complex. It depends on [4Fe-4S] cluster as a cofactor.

The protein localises to the cell membrane. It carries out the reaction a quinone + NADH + 5 H(+)(in) = a quinol + NAD(+) + 4 H(+)(out). NDH-1 shuttles electrons from NADH, via FMN and iron-sulfur (Fe-S) centers, to quinones in the respiratory chain. The immediate electron acceptor for the enzyme in this species is believed to be a menaquinone. Couples the redox reaction to proton translocation (for every two electrons transferred, four hydrogen ions are translocated across the cytoplasmic membrane), and thus conserves the redox energy in a proton gradient. This is NADH-quinone oxidoreductase subunit B from Geobacillus thermodenitrificans (strain NG80-2).